A 313-amino-acid chain; its full sequence is 3'-5' exoribonuclease YhaM (313 aa).

The HD domain maps to 163-279 (HVVSMLRLAK…LHQIDLMDAS (117 aa)).

It belongs to the YhaM family.

Shows a 3'-5' exoribonuclease activity. The sequence is that of 3'-5' exoribonuclease YhaM from Listeria monocytogenes serotype 4b (strain CLIP80459).